The following is a 175-amino-acid chain: Nascent polypeptide-associated complex subunit beta (175 aa).

2 disordered regions span residues 1–36 (MDKE…SQGD) and 129–175 (RQAA…EELE). One can recognise an NAC-A/B domain in the interval 34–101 (QGDDRKLQAA…GQTKELTELV (68 aa)). Residues 149 to 163 (EGDDEIPDLVDNFDE) show a composition bias toward acidic residues. The span at 164 to 175 (AEVKKSDLEELE) shows a compositional bias: basic and acidic residues.

This sequence belongs to the NAC-beta family. In terms of assembly, part of the nascent polypeptide-associated complex (NAC), consisting of EGD2 and EGD1. NAC associates with ribosomes via EGD1.

Its subcellular location is the cytoplasm. The protein localises to the nucleus. Functionally, component of the nascent polypeptide-associated complex (NAC), a dynamic component of the ribosomal exit tunnel, protecting the emerging polypeptides from interaction with other cytoplasmic proteins to ensure appropriate nascent protein targeting. The NAC complex also promotes mitochondrial protein import by enhancing productive ribosome interactions with the outer mitochondrial membrane and blocks the inappropriate interaction of ribosomes translating non-secretory nascent polypeptides with translocation sites in the membrane of the endoplasmic reticulum. EGD1 may act as a transcription factor that exert a negative effect on the expression of several genes that are transcribed by RNA polymerase II. This chain is Nascent polypeptide-associated complex subunit beta (EGD1), found in Cryptococcus neoformans var. neoformans serotype D (strain B-3501A) (Filobasidiella neoformans).